An 89-amino-acid polypeptide reads, in one-letter code: Probable monothiol glutaredoxin GrlA (89 aa).

The region spanning 1–89 (MLYMKGTPKM…EPMLRDAVAA (89 aa)) is the Glutaredoxin domain. K5 contributes to the glutathione binding site. C13 serves as a coordination point for [2Fe-2S] cluster. Residues R42, F54, and 67 to 68 (SD) contribute to the glutathione site.

It belongs to the glutaredoxin family. Monothiol subfamily.

The polypeptide is Probable monothiol glutaredoxin GrlA (grlA) (Legionella pneumophila subsp. pneumophila (strain Philadelphia 1 / ATCC 33152 / DSM 7513)).